Consider the following 106-residue polypeptide: UPF0091 protein RC0354 (106 aa).

Belongs to the UPF0091 family.

This Rickettsia conorii (strain ATCC VR-613 / Malish 7) protein is UPF0091 protein RC0354.